A 193-amino-acid polypeptide reads, in one-letter code: Bifunctional protein PyrR (193 aa).

Substrate contacts are provided by residues 48-49 (TR), arginine 89, arginine 93, 110-118 (DDVLFSGRT), arginine 143, and valine 167. Residues 106-118 (VVLVDDVLFSGRT) carry the PRPP-binding motif.

The protein belongs to the purine/pyrimidine phosphoribosyltransferase family. PyrR subfamily.

The catalysed reaction is UMP + diphosphate = 5-phospho-alpha-D-ribose 1-diphosphate + uracil. Regulates the transcription of the pyrimidine nucleotide (pyr) operon in response to exogenous pyrimidines. Functionally, also displays a weak uracil phosphoribosyltransferase activity which is not physiologically significant. The sequence is that of Bifunctional protein PyrR from Streptomyces coelicolor (strain ATCC BAA-471 / A3(2) / M145).